The sequence spans 631 residues: Phosphomethylpyrimidine synthase (631 aa).

Residues N239, M268, Y297, H333, S353 to G355, D394 to R397, and E433 contribute to the substrate site. H437 contributes to the Zn(2+) binding site. Y460 contributes to the substrate binding site. A Zn(2+)-binding site is contributed by H501. 3 residues coordinate [4Fe-4S] cluster: C581, C584, and C589.

Belongs to the ThiC family. In terms of assembly, homodimer. It depends on [4Fe-4S] cluster as a cofactor.

It carries out the reaction 5-amino-1-(5-phospho-beta-D-ribosyl)imidazole + S-adenosyl-L-methionine = 4-amino-2-methyl-5-(phosphooxymethyl)pyrimidine + CO + 5'-deoxyadenosine + formate + L-methionine + 3 H(+). It participates in cofactor biosynthesis; thiamine diphosphate biosynthesis. In terms of biological role, catalyzes the synthesis of the hydroxymethylpyrimidine phosphate (HMP-P) moiety of thiamine from aminoimidazole ribotide (AIR) in a radical S-adenosyl-L-methionine (SAM)-dependent reaction. The chain is Phosphomethylpyrimidine synthase from Shigella flexneri serotype 5b (strain 8401).